The primary structure comprises 1031 residues: Zinc finger protein 445 (1031 aa).

Residues 1–43 are disordered; the sequence is MPPGRWHAAYPAQAQSSRERGRLQTVKKEEEDESYTPVQAARP. A compositionally biased stretch (basic and acidic residues) spans 17 to 29; sequence SRERGRLQTVKKE. K28 participates in a covalent cross-link: Glycyl lysine isopeptide (Lys-Gly) (interchain with G-Cter in SUMO1). The SCAN box domain maps to 55 to 137; that stretch reads RQLFRQLRYH…ALLEELQRDL (83 aa). Residues 234–304 enclose the KRAB domain; sequence MTFKDVEVTF…NMQAAQPKGN (71 aa). Residues K317, K374, K375, and K399 each participate in a glycyl lysine isopeptide (Lys-Gly) (interchain with G-Cter in SUMO2) cross-link. 3 C2H2-type zinc fingers span residues 485-507, 513-535, and 541-563; these read FKCS…QRLH, FKCR…EKIH, and YKCD…RETH. K567 is covalently cross-linked (Glycyl lysine isopeptide (Lys-Gly) (interchain with G-Cter in SUMO2)). 2 consecutive C2H2-type zinc fingers follow at residues 597-619 and 625-647; these read FDCS…QRIH and YKCT…MRLH. Residue K654 forms a Glycyl lysine isopeptide (Lys-Gly) (interchain with G-Cter in SUMO2) linkage. 2 C2H2-type zinc fingers span residues 681 to 703 and 709 to 731; these read FLCQ…QRIH and YQCS…KKKH. Glycyl lysine isopeptide (Lys-Gly) (interchain with G-Cter in SUMO2) cross-links involve residues K736 and K758. 5 consecutive C2H2-type zinc fingers follow at residues 762–784, 790–812, 840–862, 868–890, and 896–918; these read YKCS…QRVH, YKCR…QRIH, FWCQ…KGIH, YKCN…QRIH, and FKCQ…QRKH. Residues 911–939 are disordered; that stretch reads LSSHQRKHTRAAQAERSPPARSSSQDTKL. Glycyl lysine isopeptide (Lys-Gly) (interchain with G-Cter in SUMO2) cross-links involve residues K938, K956, and K975. 2 C2H2-type zinc fingers span residues 978–1000 and 1006–1028; these read HKCS…KRFH and FKCS…MKNH.

This sequence belongs to the krueppel C2H2-type zinc-finger protein family.

The protein localises to the nucleus. Its function is as follows. Transcription regulator required to maintain maternal and paternal gene imprinting, a process by which gene expression is restricted in a parent of origin-specific manner by epigenetic modification of genomic DNA and chromatin, including DNA methylation. Acts by controlling DNA methylation during the earliest multicellular stages of development at multiple imprinting control regions (ICRs). Acts together with ZFP57, but seems to be the major factor in human early embryonic imprinting maintenance. In contrast, in mice, ZFP57 plays the predominant role in imprinting maintenance. The sequence is that of Zinc finger protein 445 from Homo sapiens (Human).